A 360-amino-acid chain; its full sequence is Methionine import ATP-binding protein MetN (360 aa).

Positions 1–22 (MSHTASTPTPEEYSAQQPSTQG) are disordered. The ABC transporter domain occupies 25–265 (VEFRGITKVF…PQTQVAQKFV (241 aa)). Residue 62 to 69 (GYSGAGKS) participates in ATP binding.

It belongs to the ABC transporter superfamily. Methionine importer (TC 3.A.1.24) family. As to quaternary structure, the complex is composed of two ATP-binding proteins (MetN), two transmembrane proteins (MetI) and a solute-binding protein (MetQ).

The protein localises to the cell membrane. It catalyses the reaction L-methionine(out) + ATP + H2O = L-methionine(in) + ADP + phosphate + H(+). It carries out the reaction D-methionine(out) + ATP + H2O = D-methionine(in) + ADP + phosphate + H(+). Its function is as follows. Part of the ABC transporter complex MetNIQ involved in methionine import. Responsible for energy coupling to the transport system. The chain is Methionine import ATP-binding protein MetN from Corynebacterium glutamicum (strain ATCC 13032 / DSM 20300 / JCM 1318 / BCRC 11384 / CCUG 27702 / LMG 3730 / NBRC 12168 / NCIMB 10025 / NRRL B-2784 / 534).